We begin with the raw amino-acid sequence, 148 residues long: Large ribosomal subunit protein bL9 (148 aa).

The protein belongs to the bacterial ribosomal protein bL9 family.

Its function is as follows. Binds to the 23S rRNA. In Chloroflexus aurantiacus (strain ATCC 29366 / DSM 635 / J-10-fl), this protein is Large ribosomal subunit protein bL9.